Here is a 124-residue protein sequence, read N- to C-terminus: Holo-[acyl-carrier-protein] synthase (124 aa).

Positions 5 and 51 each coordinate Mg(2+).

The protein belongs to the P-Pant transferase superfamily. AcpS family. Mg(2+) is required as a cofactor.

The protein resides in the cytoplasm. It catalyses the reaction apo-[ACP] + CoA = holo-[ACP] + adenosine 3',5'-bisphosphate + H(+). Functionally, transfers the 4'-phosphopantetheine moiety from coenzyme A to a Ser of acyl-carrier-protein. The sequence is that of Holo-[acyl-carrier-protein] synthase from Hydrogenobaculum sp. (strain Y04AAS1).